A 23-amino-acid chain; its full sequence is SV40 early leader protein (23 aa).

The tract at residues 1–23 is disordered; that stretch reads MQRPRPPRPLSYSRSSEEAFLEA.

This sequence belongs to the polyomavirus early leader protein family.

May play a role in the lytic cycle. This is SV40 early leader protein from Macaca (macaques).